The primary structure comprises 137 residues: Histone H2B.4 (137 aa).

The span at Met-1–Lys-37 shows a compositional bias: basic and acidic residues. A disordered region spans residues Met-1–Lys-45. An N6-acetyllysine mark is found at Lys-7 and Lys-27. Lys-133 is covalently cross-linked (Glycyl lysine isopeptide (Lys-Gly) (interchain with G-Cter in ubiquitin)).

It belongs to the histone H2B family. As to quaternary structure, the nucleosome is a histone octamer containing two molecules each of H2A, H2B, H3 and H4 assembled in one H3-H4 heterotetramer and two H2A-H2B heterodimers. The octamer wraps approximately 147 bp of DNA. Can be acetylated to form H2BK6ac and H2BK33ac. In terms of processing, monoubiquitinated to form H2BK143ub1; may give a specific tag for epigenetic transcriptional activation.

It localises to the nucleus. The protein localises to the chromosome. In terms of biological role, core component of nucleosome. Nucleosomes wrap and compact DNA into chromatin, limiting DNA accessibility to the cellular machineries which require DNA as a template. Histones thereby play a central role in transcription regulation, DNA repair, DNA replication and chromosomal stability. DNA accessibility is regulated via a complex set of post-translational modifications of histones, also called histone code, and nucleosome remodeling. This is Histone H2B.4 from Zea mays (Maize).